Reading from the N-terminus, the 119-residue chain is Protein TusC (119 aa).

It belongs to the DsrF/TusC family. As to quaternary structure, heterohexamer, formed by a dimer of trimers. The hexameric TusBCD complex contains 2 copies each of TusB, TusC and TusD. The TusBCD complex interacts with TusE.

The protein resides in the cytoplasm. In terms of biological role, part of a sulfur-relay system required for 2-thiolation of 5-methylaminomethyl-2-thiouridine (mnm(5)s(2)U) at tRNA wobble positions. The polypeptide is Protein TusC (Escherichia coli O127:H6 (strain E2348/69 / EPEC)).